A 350-amino-acid polypeptide reads, in one-letter code: Neutral protease 2 homolog SNOG_10522 (350 aa).

Residues 1–18 form the signal peptide; the sequence is MKVSSQLAVAALASFATA. Positions 19 to 180 are excised as a propeptide; it reads ASVDVHKRET…AKALNKRTAI (162 aa). 2 cysteine pairs are disulfide-bonded: Cys-184–Cys-251 and Cys-258–Cys-276. His-301 contacts Zn(2+). Glu-302 is a catalytic residue. Zn(2+) contacts are provided by His-305 and Asp-316.

This sequence belongs to the peptidase M35 family. It depends on Zn(2+) as a cofactor.

The protein localises to the secreted. It carries out the reaction Preferential cleavage of bonds with hydrophobic residues in P1'. Also 3-Asn-|-Gln-4 and 8-Gly-|-Ser-9 bonds in insulin B chain.. In terms of biological role, secreted metalloproteinase that allows assimilation of proteinaceous substrates. Shows high activities on basic nuclear substrates such as histone and protamine. This Phaeosphaeria nodorum (strain SN15 / ATCC MYA-4574 / FGSC 10173) (Glume blotch fungus) protein is Neutral protease 2 homolog SNOG_10522.